A 467-amino-acid polypeptide reads, in one-letter code: UDP-N-acetylmuramate--L-alanine ligase (467 aa).

Position 112–118 (112–118) interacts with ATP; that stretch reads GTHGKTT.

Belongs to the MurCDEF family.

It is found in the cytoplasm. The enzyme catalyses UDP-N-acetyl-alpha-D-muramate + L-alanine + ATP = UDP-N-acetyl-alpha-D-muramoyl-L-alanine + ADP + phosphate + H(+). It functions in the pathway cell wall biogenesis; peptidoglycan biosynthesis. Functionally, cell wall formation. This chain is UDP-N-acetylmuramate--L-alanine ligase, found in Azoarcus sp. (strain BH72).